A 75-amino-acid polypeptide reads, in one-letter code: Protein Tlp homolog (75 aa).

The protein belongs to the Tlp family.

In Clostridium acetobutylicum (strain ATCC 824 / DSM 792 / JCM 1419 / IAM 19013 / LMG 5710 / NBRC 13948 / NRRL B-527 / VKM B-1787 / 2291 / W), this protein is Protein Tlp homolog.